A 440-amino-acid chain; its full sequence is C4-dicarboxylate transport protein (440 aa).

The next 9 helical transmembrane spans lie at V15 to A35, L46 to M66, Y78 to V98, A146 to L166, I190 to I210, L224 to C244, V291 to L311, I332 to G352, and I354 to I374. Positions G419 to R440 are disordered.

Belongs to the dicarboxylate/amino acid:cation symporter (DAACS) (TC 2.A.23) family.

It is found in the cell inner membrane. In terms of biological role, responsible for the transport of dicarboxylates such as succinate, fumarate, and malate from the periplasm across the membrane. In Pseudomonas entomophila (strain L48), this protein is C4-dicarboxylate transport protein.